The primary structure comprises 286 residues: NADPH-dependent 7-cyano-7-deazaguanine reductase (286 aa).

Residue 92-94 (IES) coordinates substrate. 94–95 (SK) is a binding site for NADPH. Catalysis depends on Cys194, which acts as the Thioimide intermediate. Asp201 (proton donor) is an active-site residue. 233–234 (HE) lines the substrate pocket. Residue 262–263 (RG) participates in NADPH binding.

The protein belongs to the GTP cyclohydrolase I family. QueF type 2 subfamily. As to quaternary structure, homodimer.

It is found in the cytoplasm. The enzyme catalyses 7-aminomethyl-7-carbaguanine + 2 NADP(+) = 7-cyano-7-deazaguanine + 2 NADPH + 3 H(+). The protein operates within tRNA modification; tRNA-queuosine biosynthesis. In terms of biological role, catalyzes the NADPH-dependent reduction of 7-cyano-7-deazaguanine (preQ0) to 7-aminomethyl-7-deazaguanine (preQ1). The polypeptide is NADPH-dependent 7-cyano-7-deazaguanine reductase (Shewanella oneidensis (strain ATCC 700550 / JCM 31522 / CIP 106686 / LMG 19005 / NCIMB 14063 / MR-1)).